A 109-amino-acid polypeptide reads, in one-letter code: Flagellar hook-basal body complex protein FliE (109 aa).

It belongs to the FliE family.

It localises to the bacterial flagellum basal body. This chain is Flagellar hook-basal body complex protein FliE, found in Pseudomonas fluorescens (strain Pf0-1).